A 105-amino-acid polypeptide reads, in one-letter code: Urease subunit beta (105 aa).

Belongs to the urease beta subunit family. In terms of assembly, heterotrimer of UreA (gamma), UreB (beta) and UreC (alpha) subunits. Three heterotrimers associate to form the active enzyme.

Its subcellular location is the cytoplasm. The catalysed reaction is urea + 2 H2O + H(+) = hydrogencarbonate + 2 NH4(+). It functions in the pathway nitrogen metabolism; urea degradation; CO(2) and NH(3) from urea (urease route): step 1/1. The polypeptide is Urease subunit beta (Marinobacter nauticus (strain ATCC 700491 / DSM 11845 / VT8) (Marinobacter aquaeolei)).